The following is a 303-amino-acid chain: Probable 5-dehydro-4-deoxyglucarate dehydratase (303 aa).

The protein belongs to the DapA family.

The enzyme catalyses 5-dehydro-4-deoxy-D-glucarate + H(+) = 2,5-dioxopentanoate + CO2 + H2O. It functions in the pathway carbohydrate acid metabolism; D-glucarate degradation; 2,5-dioxopentanoate from D-glucarate: step 2/2. The sequence is that of Probable 5-dehydro-4-deoxyglucarate dehydratase from Pseudomonas syringae pv. syringae (strain B728a).